A 73-amino-acid chain; its full sequence is Translation initiation factor IF-1 (73 aa).

An S1-like domain is found at 1 to 73 (MAKKEDTIVL…TKARVVYRHR (73 aa)).

Belongs to the IF-1 family. Component of the 30S ribosomal translation pre-initiation complex which assembles on the 30S ribosome in the order IF-2 and IF-3, IF-1 and N-formylmethionyl-tRNA(fMet); mRNA recruitment can occur at any time during PIC assembly.

Its subcellular location is the cytoplasm. In terms of biological role, one of the essential components for the initiation of protein synthesis. Stabilizes the binding of IF-2 and IF-3 on the 30S subunit to which N-formylmethionyl-tRNA(fMet) subsequently binds. Helps modulate mRNA selection, yielding the 30S pre-initiation complex (PIC). Upon addition of the 50S ribosomal subunit IF-1, IF-2 and IF-3 are released leaving the mature 70S translation initiation complex. This is Translation initiation factor IF-1 from Chlamydia abortus (strain DSM 27085 / S26/3) (Chlamydophila abortus).